Consider the following 891-residue polypeptide: MADVEMMEYVDDVYEMDCPKFVDFSVPQVVDDNADEWFNFDHENGVPLTFDDKAVSPTAKETPTSPLPQDPQESHSVIGHSETDTTLQESSAPEIATSEKQKYASPSDDVSSAESETCEMSTDSMQDKPAVPESAVRNVTDDEATVQESSDAEETQTLPSSCVDSSTAEMSTDSLEDKPQKPQMQESPKPRKRYGNLVTSFARRDEDTTTASSDHSEPEQKKPRSRQRSVEVVSRPTRKSPRLHSRRSAEPTRLKRPSITSQAVKRRSANSALGHPRSRVLSTDQPISKRRKIGSEITPAGRPDAKKSCPKLKAKINLTMPTTPTLLKRNLAKPNTQLKTTEQMELDRIAQFQHKLAAIRKKSALSYKAVKESVPVAPVHAAVQPTRPEEFKFETDARLKSHTMETRKDTKNKDFVGNLRKYVPSPSKPQGITKPRPFNFSDNRKRTHEESFSGEKKGYEFKATALAVSQFHTKTPDRFRSKPLSEQNKGPEPAHDRPKKAKLTQPMTPALESRNRHRPVTAISQAQREEQELADMKNYKFKARPVDPRVMSNIAVGVKTVHHKEPTKPIGFDLEIEKRLLERETNKVQTEERYEFRARPLPAKILAGPVGIAEAKAAAVTIPKSPAFALKERVKVYKEKEREKEKDSEHDNSHIIKARPILHAGVPFMPNIQHKRTEPEPFSFDEKIQESKARKEAKIQETLREEERARQFRAQPLPDLTWCSGVPDKKVKPPTQMAPFSVAEKGAKQAEEWSKKMEEEIRDCKRMANAFKAKPANILYEEPFVPEKSTKPMTDISNFSLNTERRAEDRKGYEQAKYERQLAQDTAQAQREAEKEEELRQQISKQRADSIHKAKPVRHYKAVEVLPSTKPLTQPKTPKFSDRTRRSSHTS.

Basic and acidic residues predominate over residues 42 to 54 (HENGVPLTFDDKA). 5 disordered regions span residues 42–310 (HENG…KSCP), 418–454 (NLRK…SFSG), 472–518 (HTKT…NRHR), 723–746 (CSGV…AEKG), and 789–891 (STKP…SHTS). Residues 108-124 (DDVSSAESETCEMSTDS) show a composition bias toward polar residues. Residues 141–154 (DDEATVQESSDAEE) show a composition bias toward acidic residues. Residues 155 to 173 (TQTLPSSCVDSSTAEMSTD) show a composition bias toward polar residues. A compositionally biased stretch (basic residues) spans 236 to 246 (PTRKSPRLHSR). A compositionally biased stretch (basic and acidic residues) spans 442–454 (DNRKRTHEESFSG). A compositionally biased stretch (polar residues) spans 791-802 (KPMTDISNFSLN). Basic and acidic residues-rich tracts occupy residues 803 to 822 (TERR…ERQL) and 831 to 852 (REAE…DSIH).

The protein belongs to the TPX2 family. Detectable in immature oocytes.

The protein resides in the nucleus. It is found in the cytoplasm. It localises to the cytoskeleton. The protein localises to the spindle. Spindle assembly factor. Required for normal assembly of mitotic spindles. This Patiria pectinifera (Starfish) protein is Targeting protein for Xklp2 homolog.